A 262-amino-acid polypeptide reads, in one-letter code: Small ribosomal subunit protein eS1 (262 aa).

Over residues 234-251 (DPKEDSGKNVKSLPESKE) the composition is skewed to basic and acidic residues. The disordered stretch occupies residues 234–262 (DPKEDSGKNVKSLPESKEATNILTAELKH).

Belongs to the eukaryotic ribosomal protein eS1 family. As to quaternary structure, component of the small ribosomal subunit. Mature ribosomes consist of a small (40S) and a large (60S) subunit. The 40S subunit contains about 33 different proteins and 1 molecule of RNA (18S). The 60S subunit contains about 49 different proteins and 3 molecules of RNA (25S, 5.8S and 5S).

It localises to the cytoplasm. This is Small ribosomal subunit protein eS1 from Plasmodium yoelii yoelii.